A 1295-amino-acid chain; its full sequence is Phosphoribosylformylglycinamidine synthase (1295 aa).

A disordered region spans residues 305-327 (WPGAATGSGGEIRDEGATGRGAK). ATP-binding positions include 307–318 (GAATGSGGEIRD), 386–388 (TGY), and alanine 678. Mg(2+) contacts are provided by aspartate 679, glutamate 718, asparagine 722, and aspartate 884. ATP is bound at residue serine 886. Positions 1042–1295 (VAVLREQGVN…IFRNARKQLG (254 aa)) constitute a Glutamine amidotransferase type-1 domain. Cysteine 1135 functions as the Nucleophile in the catalytic mechanism. Catalysis depends on residues histidine 1260 and glutamate 1262.

In the N-terminal section; belongs to the FGAMS family. As to quaternary structure, monomer.

The protein localises to the cytoplasm. The catalysed reaction is N(2)-formyl-N(1)-(5-phospho-beta-D-ribosyl)glycinamide + L-glutamine + ATP + H2O = 2-formamido-N(1)-(5-O-phospho-beta-D-ribosyl)acetamidine + L-glutamate + ADP + phosphate + H(+). It participates in purine metabolism; IMP biosynthesis via de novo pathway; 5-amino-1-(5-phospho-D-ribosyl)imidazole from N(2)-formyl-N(1)-(5-phospho-D-ribosyl)glycinamide: step 1/2. Its function is as follows. Phosphoribosylformylglycinamidine synthase involved in the purines biosynthetic pathway. Catalyzes the ATP-dependent conversion of formylglycinamide ribonucleotide (FGAR) and glutamine to yield formylglycinamidine ribonucleotide (FGAM) and glutamate. The chain is Phosphoribosylformylglycinamidine synthase from Salmonella typhimurium (strain LT2 / SGSC1412 / ATCC 700720).